The following is a 305-amino-acid chain: Metalloendoproteinase 1 (305 aa).

Residues 1–28 (MTLRNHQELLVALATLYFLATSLPSVSA) form the signal peptide. The propeptide at 29 to 133 (HGPYAWDGEA…KTTSFGMISD (105 aa)) is activation peptide. N-linked (GlcNAc...) asparagine glycosylation occurs at Asn-95. The short motif at 111–118 (PRCGVPDI) is the Cysteine switch element. Position 113 (Cys-113) interacts with Zn(2+). N-linked (GlcNAc...) asparagine glycosylation occurs at Asn-123. Residue His-258 participates in Zn(2+) binding. The active site involves Glu-259. Zn(2+) is bound by residues His-262 and His-268.

Belongs to the peptidase M10A family. Matrix metalloproteinases (MMPs) subfamily. The cofactor is Zn(2+).

Matrix metalloproteinases (MMPs) or matrixins may play a role in the degradation and remodeling of the extracellular matrix (ECM) during development or in response to stresses. In Glycine max (Soybean), this protein is Metalloendoproteinase 1.